Reading from the N-terminus, the 221-residue chain is Histone H1.3 (221 aa).

Positions 1 to 17 (MSETAPVAPAAPAPAEK) are enriched in low complexity. The tract at residues 1–42 (MSETAPVAPAAPAPAEKTPVKKKAKKSGVAAGKRKASGPPVS) is disordered. Position 2 is an N-acetylserine (Ser-2). Ser-2 carries the phosphoserine modification. Lys-17 is modified (N6-acetyllysine). Thr-18 bears the Phosphothreonine mark. Residues 20–36 (VKKKAKKSGVAAGKRKA) show a composition bias toward basic residues. Residues Lys-35 and Lys-53 each carry the N6-(beta-hydroxybutyryl)lysine modification. Residues 37-110 (SGPPVSELIT…GASGSFKLNK (74 aa)) enclose the H15 domain. Citrulline is present on Arg-55. N6-(beta-hydroxybutyryl)lysine occurs at positions 65, 86, and 91. Residues 87-221 (SLVSKGTLVQ…KAKKAVSKKK (135 aa)) are disordered. Residue Ser-105 is modified to Phosphoserine; by PKC. N6-(beta-hydroxybutyryl)lysine is present on Lys-107. 4 stretches are compositionally biased toward basic residues: residues 120-141 (KGKK…KPKK), 150-161 (KAAKKTPKKVKK), 170-187 (KVAK…KKPT), and 194-221 (KAPK…SKKK).

Belongs to the histone H1/H5 family. In terms of processing, H1 histones are progressively phosphorylated during the cell cycle, becoming maximally phosphorylated during late G2 phase and M phase, and being dephosphorylated sharply thereafter. Citrullination at Arg-55 (H1R54ci) by PADI4 takes place within the DNA-binding site of H1 and results in its displacement from chromatin and global chromatin decondensation, thereby promoting pluripotency and stem cell maintenance.

It is found in the nucleus. The protein resides in the chromosome. Its function is as follows. H1 histones bind to linker DNA between nucleosomes forming the macromolecular structure known as the chromatin fiber. H1 histones are necessary for the condensation of nucleosome chains into higher-order structured fibers. Also acts as a regulator of individual gene transcription through chromatin remodeling, nucleosome spacing and DNA methylation. In Bos taurus (Bovine), this protein is Histone H1.3.